The chain runs to 277 residues: Phosphate import ATP-binding protein PstB 2 (277 aa).

Residues 31-272 (IEVPGLNLFY…PAKKQTEDYI (242 aa)) form the ABC transporter domain. 63-70 (GPSGCGKS) contacts ATP.

It belongs to the ABC transporter superfamily. Phosphate importer (TC 3.A.1.7) family. The complex is composed of two ATP-binding proteins (PstB), two transmembrane proteins (PstC and PstA) and a solute-binding protein (PstS).

Its subcellular location is the cell inner membrane. The catalysed reaction is phosphate(out) + ATP + H2O = ADP + 2 phosphate(in) + H(+). Functionally, part of the ABC transporter complex PstSACB involved in phosphate import. Responsible for energy coupling to the transport system. This Pseudomonas syringae pv. syringae (strain B728a) protein is Phosphate import ATP-binding protein PstB 2.